We begin with the raw amino-acid sequence, 63 residues long: uncharacterized protein (63 aa).

Residues 1 to 21 form the signal peptide; it reads MNRALILTFVLFFALFAISSA.

This is an uncharacterized protein from Dictyostelium discoideum (Social amoeba).